The primary structure comprises 177 residues: Early nodulin-like protein 6 (177 aa).

The N-terminal stretch at 1–23 is a signal peptide; that stretch reads MGGQKIVLLSIFVCFYVFSLVSC. In terms of domain architecture, Phytocyanin spans 24-127; that stretch reads TEFEAGGENG…GQKMIIKVME (104 aa). An N-linked (GlcNAc...) asparagine glycan is attached at N41. Cysteines 81 and 115 form a disulfide. N149 carries GPI-anchor amidated asparagine lipidation. The propeptide at 150 to 177 is removed in mature form; the sequence is HAVRKTSRFLGAGLVTISILVITVFSLV.

Belongs to the early nodulin-like (ENODL) family. Confined to flowers.

The protein localises to the cell membrane. Functionally, may act as a carbohydrate transporter. The polypeptide is Early nodulin-like protein 6 (Arabidopsis thaliana (Mouse-ear cress)).